Consider the following 264-residue polypeptide: Undecaprenyl-diphosphatase (264 aa).

The next 8 helical transmembrane spans lie at 1-21, 39-59, 87-107, 111-131, 144-164, 187-207, 208-228, and 244-264; these read MDLI…FLPI, QGLA…AVYF, WYLI…DDLI, LRST…LWVA, IALS…IPGT, FSFL…GLQL, VLSA…LSAV, and IGML…FIAV.

This sequence belongs to the UppP family.

The protein resides in the cell inner membrane. It catalyses the reaction di-trans,octa-cis-undecaprenyl diphosphate + H2O = di-trans,octa-cis-undecaprenyl phosphate + phosphate + H(+). Catalyzes the dephosphorylation of undecaprenyl diphosphate (UPP). Confers resistance to bacitracin. This is Undecaprenyl-diphosphatase from Teredinibacter turnerae (strain ATCC 39867 / T7901).